The primary structure comprises 842 residues: Protein translocase subunit SecA 1 (842 aa).

Residues glutamine 85, 103-107, and aspartate 493 contribute to the ATP site; that span reads GEGKT. 4 residues coordinate Zn(2+): cysteine 824, cysteine 826, cysteine 835, and histidine 836.

It belongs to the SecA family. Monomer and homodimer. Part of the essential Sec protein translocation apparatus which comprises SecA, SecYEG and auxiliary proteins SecDF. Other proteins may also be involved. Zn(2+) serves as cofactor.

It localises to the cell membrane. Its subcellular location is the cytoplasm. It catalyses the reaction ATP + H2O + cellular proteinSide 1 = ADP + phosphate + cellular proteinSide 2.. Part of the Sec protein translocase complex. Interacts with the SecYEG preprotein conducting channel. Has a central role in coupling the hydrolysis of ATP to the transfer of proteins into and across the cell membrane, serving as an ATP-driven molecular motor driving the stepwise translocation of polypeptide chains across the membrane. The protein is Protein translocase subunit SecA 1 of Streptococcus agalactiae serotype Ia (strain ATCC 27591 / A909 / CDC SS700).